A 240-amino-acid chain; its full sequence is Large ribosomal subunit protein bL25 (240 aa).

2 disordered regions span residues 1–23 (MATV…ARAE) and 207–240 (PAAA…AKKK).

Belongs to the bacterial ribosomal protein bL25 family. CTC subfamily. As to quaternary structure, part of the 50S ribosomal subunit; part of the 5S rRNA/L5/L18/L25 subcomplex. Contacts the 5S rRNA. Binds to the 5S rRNA independently of L5 and L18.

Its function is as follows. This is one of the proteins that binds to the 5S RNA in the ribosome where it forms part of the central protuberance. This is Large ribosomal subunit protein bL25 from Rhodopseudomonas palustris (strain BisB18).